The sequence spans 396 residues: Elongation factor Tu (396 aa).

Residues 10–206 (KPHVNVGTIG…ALDTYIPTPE (197 aa)) enclose the tr-type G domain. The segment at 19–26 (GHVDHGKT) is G1. 19–26 (GHVDHGKT) contributes to the GTP binding site. Position 26 (Thr26) interacts with Mg(2+). The tract at residues 60–64 (GITIN) is G2. A G3 region spans residues 81-84 (DCPG). Residues 81–85 (DCPGH) and 136–139 (NKCD) contribute to the GTP site. The interval 136 to 139 (NKCD) is G4. Residues 174–176 (SAK) form a G5 region.

This sequence belongs to the TRAFAC class translation factor GTPase superfamily. Classic translation factor GTPase family. EF-Tu/EF-1A subfamily. Monomer.

The protein localises to the cytoplasm. The enzyme catalyses GTP + H2O = GDP + phosphate + H(+). Its function is as follows. GTP hydrolase that promotes the GTP-dependent binding of aminoacyl-tRNA to the A-site of ribosomes during protein biosynthesis. The chain is Elongation factor Tu from Burkholderia cenocepacia (strain HI2424).